The primary structure comprises 108 residues: uncharacterized protein (108 aa).

A run of 3 helical transmembrane segments spans residues Gly-26–Ile-46, Leu-54–Phe-74, and Ile-84–Met-104.

It localises to the cell membrane. This is an uncharacterized protein from Methanocaldococcus jannaschii (strain ATCC 43067 / DSM 2661 / JAL-1 / JCM 10045 / NBRC 100440) (Methanococcus jannaschii).